The primary structure comprises 252 residues: MENERAKQVYLAKLNEQAERYDEMVEAMKKVAALDVELTIEERNLLSVGYKNVIGARRASWRILSSIEQKEESKGNEQNAKRIKDYRTKVEEELSKICYDILAVIDKHLVPFATSGESTVFYYKMKGDYFRYLAEFKSGADREEAADLSLKAYEAATSSASTELSTTHPIRLGLALNFSVFYYEILNSPERACHLAKRAFDEAIAELDSLNEDSYKDSTLIMQLLRDNLTLWTSDLEEGGEQSKGHNQQDEN.

Residues serine 65 and serine 188 each carry the phosphoserine modification.

The protein belongs to the 14-3-3 family.

It localises to the nucleus. It is found in the cytoplasm. In terms of biological role, is associated with a DNA binding complex that binds to the G box, a well-characterized cis-acting DNA regulatory element found in plant genes. This chain is 14-3-3-like protein GF14 omicron (GRF11), found in Arabidopsis thaliana (Mouse-ear cress).